Consider the following 209-residue polypeptide: Thymidylate kinase (209 aa).

10 to 17 provides a ligand contact to ATP; the sequence is GLDGAGKS.

Belongs to the thymidylate kinase family.

It carries out the reaction dTMP + ATP = dTDP + ADP. Phosphorylation of dTMP to form dTDP in both de novo and salvage pathways of dTTP synthesis. The protein is Thymidylate kinase of Francisella tularensis subsp. tularensis (strain FSC 198).